We begin with the raw amino-acid sequence, 306 residues long: 4-hydroxy-3-methylbut-2-enyl diphosphate reductase (306 aa).

Position 12 (cysteine 12) interacts with [4Fe-4S] cluster. Positions 41 and 74 each coordinate (2E)-4-hydroxy-3-methylbut-2-enyl diphosphate. The dimethylallyl diphosphate site is built by histidine 41 and histidine 74. The isopentenyl diphosphate site is built by histidine 41 and histidine 74. Cysteine 96 lines the [4Fe-4S] cluster pocket. Histidine 124 lines the (2E)-4-hydroxy-3-methylbut-2-enyl diphosphate pocket. Dimethylallyl diphosphate is bound at residue histidine 124. Isopentenyl diphosphate is bound at residue histidine 124. Glutamate 126 serves as the catalytic Proton donor. Position 164 (threonine 164) interacts with (2E)-4-hydroxy-3-methylbut-2-enyl diphosphate. Residue cysteine 194 coordinates [4Fe-4S] cluster. Residues serine 222, serine 223, asparagine 224, and serine 266 each coordinate (2E)-4-hydroxy-3-methylbut-2-enyl diphosphate. Dimethylallyl diphosphate contacts are provided by serine 222, serine 223, asparagine 224, and serine 266. Isopentenyl diphosphate contacts are provided by serine 222, serine 223, asparagine 224, and serine 266.

The protein belongs to the IspH family. Requires [4Fe-4S] cluster as cofactor.

It catalyses the reaction isopentenyl diphosphate + 2 oxidized [2Fe-2S]-[ferredoxin] + H2O = (2E)-4-hydroxy-3-methylbut-2-enyl diphosphate + 2 reduced [2Fe-2S]-[ferredoxin] + 2 H(+). It carries out the reaction dimethylallyl diphosphate + 2 oxidized [2Fe-2S]-[ferredoxin] + H2O = (2E)-4-hydroxy-3-methylbut-2-enyl diphosphate + 2 reduced [2Fe-2S]-[ferredoxin] + 2 H(+). It functions in the pathway isoprenoid biosynthesis; dimethylallyl diphosphate biosynthesis; dimethylallyl diphosphate from (2E)-4-hydroxy-3-methylbutenyl diphosphate: step 1/1. Its pathway is isoprenoid biosynthesis; isopentenyl diphosphate biosynthesis via DXP pathway; isopentenyl diphosphate from 1-deoxy-D-xylulose 5-phosphate: step 6/6. Catalyzes the conversion of 1-hydroxy-2-methyl-2-(E)-butenyl 4-diphosphate (HMBPP) into a mixture of isopentenyl diphosphate (IPP) and dimethylallyl diphosphate (DMAPP). Acts in the terminal step of the DOXP/MEP pathway for isoprenoid precursor biosynthesis. The protein is 4-hydroxy-3-methylbut-2-enyl diphosphate reductase of Dechloromonas aromatica (strain RCB).